The sequence spans 22 residues: thr operon leader peptide (22 aa).

This sequence belongs to the thr operon leader peptide family.

Functionally, this protein is involved in control of the biosynthesis of threonine. The protein is thr operon leader peptide of Klebsiella pneumoniae (strain 342).